The following is a 535-amino-acid chain: CTP synthase (535 aa).

Residues 1 to 267 are amidoligase domain; that stretch reads MTKYIFVTGG…DQIVCDHLKL (267 aa). Ser13 is a binding site for CTP. A UTP-binding site is contributed by Ser13. An ATP-binding site is contributed by 14 to 19; that stretch reads SLGKGI. L-glutamine is bound at residue Tyr54. Asp71 contacts ATP. Positions 71 and 141 each coordinate Mg(2+). CTP-binding positions include 148–150, 188–193, and Lys224; these read DIE and KTKPTQ. Residues 188–193 and Lys224 contribute to the UTP site; that span reads KTKPTQ. 240-242 lines the ATP pocket; the sequence is RDA. The 243-residue stretch at 292–534 folds into the Glutamine amidotransferase type-1 domain; the sequence is KIALVGKYVE…VRASITNKES (243 aa). An L-glutamine-binding site is contributed by Gly354. Residue Cys381 is the Nucleophile; for glutamine hydrolysis of the active site. Residues 382–385, Glu405, and Arg462 contribute to the L-glutamine site; that span reads LGMQ. Catalysis depends on residues His507 and Glu509.

This sequence belongs to the CTP synthase family. Homotetramer.

It carries out the reaction UTP + L-glutamine + ATP + H2O = CTP + L-glutamate + ADP + phosphate + 2 H(+). It catalyses the reaction L-glutamine + H2O = L-glutamate + NH4(+). The catalysed reaction is UTP + NH4(+) + ATP = CTP + ADP + phosphate + 2 H(+). The protein operates within pyrimidine metabolism; CTP biosynthesis via de novo pathway; CTP from UDP: step 2/2. With respect to regulation, allosterically activated by GTP, when glutamine is the substrate; GTP has no effect on the reaction when ammonia is the substrate. The allosteric effector GTP functions by stabilizing the protein conformation that binds the tetrahedral intermediate(s) formed during glutamine hydrolysis. Inhibited by the product CTP, via allosteric rather than competitive inhibition. Its function is as follows. Catalyzes the ATP-dependent amination of UTP to CTP with either L-glutamine or ammonia as the source of nitrogen. Regulates intracellular CTP levels through interactions with the four ribonucleotide triphosphates. In Bacillus cereus (strain AH187), this protein is CTP synthase.